A 50-amino-acid polypeptide reads, in one-letter code: Large ribosomal subunit protein bL33B (50 aa).

The protein belongs to the bacterial ribosomal protein bL33 family.

In Enterococcus faecalis (strain ATCC 700802 / V583), this protein is Large ribosomal subunit protein bL33B (rpmG2).